The chain runs to 208 residues: Uracil phosphoribosyltransferase (208 aa).

5-phospho-alpha-D-ribose 1-diphosphate is bound by residues Arg78, Arg103, and 130-138 (DPMLATGGS). Uracil-binding positions include Ile193 and 198–200 (GDA). Asp199 lines the 5-phospho-alpha-D-ribose 1-diphosphate pocket.

Belongs to the UPRTase family. Mg(2+) serves as cofactor.

The enzyme catalyses UMP + diphosphate = 5-phospho-alpha-D-ribose 1-diphosphate + uracil. The protein operates within pyrimidine metabolism; UMP biosynthesis via salvage pathway; UMP from uracil: step 1/1. Allosterically activated by GTP. Catalyzes the conversion of uracil and 5-phospho-alpha-D-ribose 1-diphosphate (PRPP) to UMP and diphosphate. The protein is Uracil phosphoribosyltransferase of Shewanella sp. (strain ANA-3).